A 112-amino-acid chain; its full sequence is Putative pterin-4-alpha-carbinolamine dehydratase (112 aa).

This sequence belongs to the pterin-4-alpha-carbinolamine dehydratase family.

The catalysed reaction is (4aS,6R)-4a-hydroxy-L-erythro-5,6,7,8-tetrahydrobiopterin = (6R)-L-erythro-6,7-dihydrobiopterin + H2O. This chain is Putative pterin-4-alpha-carbinolamine dehydratase, found in Shewanella halifaxensis (strain HAW-EB4).